The following is a 230-amino-acid chain: NAD(P)H-hydrate epimerase (230 aa).

The region spanning 11-218 (AIDVDQELFT…ALQRKYELNL (208 aa)) is the YjeF N-terminal domain. 61-65 (NNGGD) provides a ligand contact to (6S)-NADPHX. Residues asparagine 62 and aspartate 126 each contribute to the K(+) site. (6S)-NADPHX-binding positions include 130-136 (GFSFKPP) and aspartate 159. Residue serine 162 participates in K(+) binding.

It belongs to the NnrE/AIBP family. K(+) is required as a cofactor.

The catalysed reaction is (6R)-NADHX = (6S)-NADHX. It catalyses the reaction (6R)-NADPHX = (6S)-NADPHX. In terms of biological role, catalyzes the epimerization of the S- and R-forms of NAD(P)HX, a damaged form of NAD(P)H that is a result of enzymatic or heat-dependent hydration. This is a prerequisite for the S-specific NAD(P)H-hydrate dehydratase to allow the repair of both epimers of NAD(P)HX. In Drosophila erecta (Fruit fly), this protein is NAD(P)H-hydrate epimerase.